We begin with the raw amino-acid sequence, 328 residues long: MSQIVVCAMYKFVTLEDFEAMRQPLLDTMIKNNVKGTLLLANEGINGTVAGTRESIDNLLAYLKADPRLVDIDYKESYHQEMPFYRSKVKLKKEIVTLGIDEIDPNKICGKYVEPKDWNDLISDPETVLIDTRNEYEIEIGTFKNAINPHTENFREFPQYVDENLDPKKHKKVAMFCTGGIRCEKSTALLKAKGFDEVYHLKGGILKYLEEVPKEKSMWQGECFVFDSRVAVNHDLEKGNYDQCFACRMPITEDDKKRPEYVKGISCHHCYDKVTEKQKARFAEREKQSQLAAEKGFSHVGDEAKKLAQLNKQKKQQAKEAARKKAQQ.

Residues 123 to 217 form the Rhodanese domain; the sequence is SDPETVLIDT…YLEEVPKEKS (95 aa). Residue Cys-177 is the Cysteine persulfide intermediate of the active site. The tract at residues 304 to 328 is disordered; it reads AKKLAQLNKQKKQQAKEAARKKAQQ. The segment covering 317–328 has biased composition (basic and acidic residues); the sequence is QAKEAARKKAQQ.

Belongs to the TrhO family.

The catalysed reaction is uridine(34) in tRNA + AH2 + O2 = 5-hydroxyuridine(34) in tRNA + A + H2O. Its function is as follows. Catalyzes oxygen-dependent 5-hydroxyuridine (ho5U) modification at position 34 in tRNAs. This Francisella tularensis subsp. holarctica (strain LVS) protein is tRNA uridine(34) hydroxylase.